The primary structure comprises 224 residues: Orotidine 5'-phosphate decarboxylase (224 aa).

Substrate contacts are provided by residues Asp10, Lys32, 59-68, Thr115, Arg175, Gln184, Gly204, and Arg205; that span reads DLKLHDIPNT. Lys61 (proton donor) is an active-site residue.

It belongs to the OMP decarboxylase family. Type 1 subfamily. As to quaternary structure, homodimer.

It carries out the reaction orotidine 5'-phosphate + H(+) = UMP + CO2. The protein operates within pyrimidine metabolism; UMP biosynthesis via de novo pathway; UMP from orotate: step 2/2. Functionally, catalyzes the decarboxylation of orotidine 5'-monophosphate (OMP) to uridine 5'-monophosphate (UMP). This is Orotidine 5'-phosphate decarboxylase from Erythrobacter litoralis (strain HTCC2594).